A 189-amino-acid chain; its full sequence is Phosphoheptose isomerase (189 aa).

In terms of domain architecture, SIS spans V34–G189. Position 49-51 (N49–G51) interacts with substrate. 2 residues coordinate Zn(2+): H58 and E62. Substrate is bound by residues E62, N91–D92, S117–S119, S122, and Q169. Residues Q169 and H177 each coordinate Zn(2+).

This sequence belongs to the SIS family. GmhA subfamily. In terms of assembly, homotetramer. The cofactor is Zn(2+).

It localises to the cytoplasm. The enzyme catalyses 2 D-sedoheptulose 7-phosphate = D-glycero-alpha-D-manno-heptose 7-phosphate + D-glycero-beta-D-manno-heptose 7-phosphate. Its pathway is carbohydrate biosynthesis; D-glycero-D-manno-heptose 7-phosphate biosynthesis; D-glycero-alpha-D-manno-heptose 7-phosphate and D-glycero-beta-D-manno-heptose 7-phosphate from sedoheptulose 7-phosphate: step 1/1. Catalyzes the isomerization of sedoheptulose 7-phosphate in D-glycero-D-manno-heptose 7-phosphate. The chain is Phosphoheptose isomerase from Campylobacter concisus (strain 13826).